A 453-amino-acid chain; its full sequence is Carbamoyl phosphate synthase arginine-specific small chain (453 aa).

Residues Met1–Ala13 constitute a mitochondrion transit peptide. The 188-residue stretch at His233–Ala420 folds into the Glutamine amidotransferase type-1 domain. Catalysis depends on Cys309, which acts as the Nucleophile. Active-site residues include His393 and Glu395.

Belongs to the CarA family. In terms of assembly, heterodimer composed of 2 chains; the small (or glutamine) chain promotes the hydrolysis of glutamine to ammonia, which is used by the large (or ammonia) chain to synthesize carbamoyl phosphate.

The protein resides in the mitochondrion matrix. The catalysed reaction is hydrogencarbonate + L-glutamine + 2 ATP + H2O = carbamoyl phosphate + L-glutamate + 2 ADP + phosphate + 2 H(+). It catalyses the reaction L-glutamine + H2O = L-glutamate + NH4(+). It functions in the pathway amino-acid biosynthesis; L-arginine biosynthesis; carbamoyl phosphate from bicarbonate: step 1/1. Small subunit of the arginine-specific carbamoyl phosphate synthase (CPSase). CPSase catalyzes the formation of carbamoyl phosphate from the ammonia moiety of glutamine, carbonate, and phosphate donated by ATP, the first step of the arginine biosynthetic pathway. The small subunit (glutamine amidotransferase) binds and cleaves glutamine to supply the large subunit with the substrate ammonia. This Hypocrea virens (Gliocladium virens) protein is Carbamoyl phosphate synthase arginine-specific small chain (cpa1).